The chain runs to 245 residues: MYPVDLHMHTVASTHAYSTLSDYIAQAKQKGIKLFAITDHGPDMEDAPHHWHFINMRIWPRVVDGVGILRGIEANIKNVDGEIDCSGKMFDSLDLIIAGFHEPVFAPHDKATNTQAMIATIASGNVHIISHPGNPKYEIDVKAVAEAAAKHQVALEINNSSFLHSRKGSEDNCRAVAAAVRDAGGWVALGSDSHTAFTMGEFEECLKILDAVDFPPERILNVSPRRLLNFLESRGMAPIAEFADL.

9 residues coordinate Zn(2+): His-7, His-9, His-15, His-40, Glu-73, His-101, His-131, Asp-192, and His-194.

It belongs to the PHP family. Homotrimer. Requires Zn(2+) as cofactor.

In Escherichia coli O17:K52:H18 (strain UMN026 / ExPEC), this protein is Probable phosphatase YcdX.